The chain runs to 1168 residues: MTILTTLIKEDNHFQDLNQVFGQANTLVTGLSPSAKVTMIAEKYAQSNQQLLLITNNLYQADKLETDLLQFIDAEELYKYPVQDIMTEEFSTQSPQLMSERIRTLTALAQGKKGLFIVPLNGLKKWLTPVEMWQNHQMTLRVGEDIDVDQFLNKLVNMGYKRESVVSHIGEFSLRGGIIDIFPLIGEPIRIELFDTKIDSIRDFDVETQRSKDNVEEVDITTASDYIITEEVISHLKEELKTAYENTRPKIDKSVRNDLKETYESFKLFESTYFDHQILRRLVAFMYETPSTIIEYFQKDAIIAVDEFNRIKETEESLTVESDSFISNIIESGNGFIGQSFIKYDDFETLIEGYPVTYFSLFATTMPIKLNHIIKFSCKPVQQFYGQYDIMRSEFQRYVNQNYHIVVLVETETKVERMQAMLSEMHIPSITKLHRSMSSGQAVIIEGSLSEGFELPDMGLVVITERELFKSKQKKQRKRTKAISNAEKIKSYQDLNVGDYIVHVHHGVGRYLGVETLEVGQTHRDYIKLQYKGTDQLFVPVDQMDQVQKYVASEDKTPKLNKLGGSEWKKTKAKVQQSVEDIAEELIDLYKEREMAEGYQYGEDTAEQTTFELDFPYELTPDQAKSIDEIKDDMQKSRPMDRLLCGDVGYGKTEVAVRAAFKAVMEGKQVAFLVPTTILAQQHYETLIERMQDFPVEIQLMSRFRTPKEIKQTKEGLKTGFVDIVVGTHKLLSKDIQYKDLGLLIVDEEQRFGVRHKERIKTLKHNVDVLTLTATPIPRTLHMSMLGVRDLSVIETPPENRFPVQTYVLEQNMSFIKEALERELSRDGQVFYLYNKVQSIYEKREQLQMLMPDANIAVAHGQMTERDLEETMLSFINNEYDILVTTTIIETGVDVPNANTLIIEDADRFGLSQLYQLRGRVGRSSRIGYAYFLHPANKVLTETAEDRLQAIKEFTELGSGFKIAMRDLNIRGAGNLLGKQQHGFIDTVGFDLYSQMLEEAVNEKRGIKEPESEVPEVEVDLNLDAYLPTEYIANEQAKIEIYKKLRKTETFDQIIDIKDELIDRFNDYPVEVARLLDIVEIKVHALHSGITLIKDKGKIIDIHLSVKATENIDGEVLFKATQPLGRTMKVGVQNNAMTITLTKQNQWLDSLKFLVKCIEESMRISDEA.

Residues 633–794 (DMQKSRPMDR…MLGVRDLSVI (162 aa)) enclose the Helicase ATP-binding domain. Residue 646 to 653 (GDVGYGKT) coordinates ATP. The short motif at 747-750 (DEEQ) is the DEEQ box element. Residues 808–969 (VLEQNMSFIK…GFKIAMRDLN (162 aa)) enclose the Helicase C-terminal domain.

In the N-terminal section; belongs to the UvrB family. It in the C-terminal section; belongs to the helicase family. RecG subfamily.

The protein localises to the cytoplasm. Couples transcription and DNA repair by recognizing RNA polymerase (RNAP) stalled at DNA lesions. Mediates ATP-dependent release of RNAP and its truncated transcript from the DNA, and recruitment of nucleotide excision repair machinery to the damaged site. The polypeptide is Transcription-repair-coupling factor (Staphylococcus aureus (strain MSSA476)).